The chain runs to 447 residues: Guanine nucleotide-binding protein alpha-1 subunit (447 aa).

The N-myristoyl glycine moiety is linked to residue Gly-2. A lipid anchor (S-palmitoyl cysteine) is attached at Cys-3. The G-alpha domain maps to 40 to 447 (NEVKLLLLGA…QQNLKKSGIL (408 aa)). Positions 43–56 (KLLLLGAGESGKST) are G1 motif. Positions 51, 52, 53, 54, 55, 56, 269, 275, 297, 363, 364, 366, and 419 each coordinate GTP. Position 55 (Ser-55) interacts with Mg(2+). The tract at residues 267-275 (DILKGRIKT) is G2 motif. Thr-275 is a binding site for Mg(2+). Residues 290 to 299 (FKVYDAGGQR) form a G3 motif region. The interval 359 to 366 (ILFLNKVD) is G4 motif. Positions 417–422 (TCATDT) are G5 motif.

The protein belongs to the G-alpha family. In terms of assembly, g proteins are composed of 3 units; alpha, beta and gamma. The alpha chain contains the guanine nucleotide binding site. Mg(2+) is required as a cofactor.

In terms of biological role, guanine nucleotide-binding proteins (G proteins) are involved as modulators or transducers in various transmembrane signaling systems. This protein is involved in the mating response pathway. The sequence is that of Guanine nucleotide-binding protein alpha-1 subunit (GPA1) from Kluyveromyces lactis (strain ATCC 8585 / CBS 2359 / DSM 70799 / NBRC 1267 / NRRL Y-1140 / WM37) (Yeast).